The primary structure comprises 201 residues: Potassium-transporting ATPase KdpC subunit (201 aa).

A helical transmembrane segment spans residues 13-33; that stretch reads IIFMIFTILCGGIYTIFITGI.

This sequence belongs to the KdpC family. As to quaternary structure, the system is composed of three essential subunits: KdpA, KdpB and KdpC.

Its subcellular location is the cell membrane. Part of the high-affinity ATP-driven potassium transport (or Kdp) system, which catalyzes the hydrolysis of ATP coupled with the electrogenic transport of potassium into the cytoplasm. This subunit acts as a catalytic chaperone that increases the ATP-binding affinity of the ATP-hydrolyzing subunit KdpB by the formation of a transient KdpB/KdpC/ATP ternary complex. The protein is Potassium-transporting ATPase KdpC subunit of Clostridium botulinum (strain Eklund 17B / Type B).